The primary structure comprises 62 residues: Photosystem II reaction center protein Z (62 aa).

The next 2 helical transmembrane spans lie at 8–28 (AVFA…VVFA) and 41–61 (FSGT…NSLI).

The protein belongs to the PsbZ family. PSII is composed of 1 copy each of membrane proteins PsbA, PsbB, PsbC, PsbD, PsbE, PsbF, PsbH, PsbI, PsbJ, PsbK, PsbL, PsbM, PsbT, PsbY, PsbZ, Psb30/Ycf12, at least 3 peripheral proteins of the oxygen-evolving complex and a large number of cofactors. It forms dimeric complexes.

It localises to the plastid. It is found in the chloroplast thylakoid membrane. Functionally, may control the interaction of photosystem II (PSII) cores with the light-harvesting antenna, regulates electron flow through the 2 photosystem reaction centers. PSII is a light-driven water plastoquinone oxidoreductase, using light energy to abstract electrons from H(2)O, generating a proton gradient subsequently used for ATP formation. The sequence is that of Photosystem II reaction center protein Z from Citrus sinensis (Sweet orange).